The primary structure comprises 259 residues: MNLLEKTRKINSMLQASAGKPVNFKEMADTLGDIIDSNVYILSRKGKLLGISIHQQIENERMKKMFEERQFPEEYTHSLFTISETSSNLDIHNEHTAFPVENKDLFQNALTTIVPIVGGGERLGTLILARLSSQFEDDDLILAEYGATVVGMEILREKSEEIEEEARSKAVVQMAINSLSYSELEAIEHIFEELDGNEGLLVASKIADRVGITRSVIVNALRKLESAGVIESRSLGMKGTYIKVLNDKFLNALAEIKMK.

A GAF domain region spans residues 1 to 155 (MNLLEKTRKI…GATVVGMEIL (155 aa)). A DNA-binding region (H-T-H motif) is located at residues 203–222 (ASKIADRVGITRSVIVNALR). Ser215 bears the Phosphoserine mark.

Belongs to the CodY family.

The protein resides in the cytoplasm. Its function is as follows. DNA-binding global transcriptional regulator which is involved in the adaptive response to starvation and acts by directly or indirectly controlling the expression of numerous genes in response to nutrient availability. During rapid exponential growth, CodY is highly active and represses genes whose products allow adaptation to nutrient depletion. The polypeptide is Global transcriptional regulator CodY (Lysinibacillus sphaericus (strain C3-41)).